A 106-amino-acid polypeptide reads, in one-letter code: Large ribosomal subunit protein bL21 (106 aa).

The protein belongs to the bacterial ribosomal protein bL21 family. In terms of assembly, part of the 50S ribosomal subunit. Contacts protein L20.

This protein binds to 23S rRNA in the presence of protein L20. The chain is Large ribosomal subunit protein bL21 from Streptomyces coelicolor (strain ATCC BAA-471 / A3(2) / M145).